Consider the following 3344-residue polypeptide: MSSLYTLRAAAQYDRRLESKKGSGWVEHKLERKGERGNTHYCSEFDISKGAKILQLVQIGNTEVGRTFLEGNRFVRANIFEIIRKTMVGRLGYDFESELWVCRNCDKTSEKYFKKCDCGETYYYSERNLMRTMNDLMYQFDMTPSEINSVDLEYLANAVDYAEQLVKRSQVPEPVELAMMEPIVASGEGILMVSEPEVMPVTTKVEEAWTIQIGEIPVPLVVIKETPVISGVEGTLNSTGFSLEADITKLVEKEILQEEVKEAVHLALEVGNEIAEKKPELKLIPYWSASLELHKRIRKHKEHAKIAAIQVQKEREKDQKVFSALELRLNLKSRRRNQAVVCDKRGTLKWETQRGHKKSKLMQQASDFVVTQIHCDFGCKTQYSEPHIPGIKQSTSKKICKPRKHSRIVGNSKINYIMKNLCDTIIERGIPVELVTKRCKRRILQKEGRSYVQLRHMNGIRARQDVSSSPDMELLFTQFCKFLVGHKPLKSKNLTFGSSGLIFKPKFADNVGRYFGDYFVVRGRLGGKLFDGRSKLARSVYAKMDQYNDVAEKFWLGFNRAFLRHRKPTDHTCTSDMDVTMCGEVAALATIILFPCHKITCNTCMSKVKGRVIDEVGEDLNCELERLRETLSAYGGSFGHVSTLLDQLNRVLNARNMNDGAFKEIAKKIDEKKESPWTHMTTINNTLYKGSLATGYEFERASNSLREIVRWHLKRTESIKAGSVESFRNKRSGKAHFNPALTCDNQLDKNGNFLWGERQYHAKRFFANYFEKIDHSKGYEYYSQRQNPNGIRKIAIGNLVFSTNLERFRQQMVEHHIDQGPITRECIALRNNNYVHVCSCVTLDDGTPATSELKTPTKNHIVLGNSGDPKYVDLPTLESDSMYIAKKGYCYMNIFLAMLINIPENEAKDFTKRVRDLVGSKLGEWPTMLDVATCANQLVVFHPDAANAELPQILVDHRQKTMHVIDSFGSVDSGYHILKANTVNQLIQFARDPLDSEMKHYIVGGEFDPTTNCLHQLIRVIYKPHELRSLLRNEPYLIVIALMSPSVLLTLFNSGAVEHALNYWIKRDQDVVEVIVLVEQLCRKVTLARTILEQFNEIRQNARDLHELMDRNNKPWISYDRSLELLSVYANSQLTDEGLLKQGFSTLDPRLREAVEKTYATLLQEEWRALSLFQKLHLRYFAFKSQPSFSEYLKPKGRADLKIVYDFSPKYCVHEVGKAFLLPVKAGAKIASRIINGCGAFIRKSAAKGCAYIFKDLFQFVHVVLVLSILLQIFRSAQGIATEHLQLKQAKAEVERQKDFDRLEALYAELCVKSGEQPTTEEFLDFVMEREPRLKDQAYNLIYIPVIHQAKSDNEKKLEQVIAFITLILMMIDVDKSDCVYRILNKFKGVINSSNTNVYHQSLDDIRDFYEDKQLTIDFDITGENQINRGPIDVTFEKWWDNQLSNNNTIGHYRIGGTFVEFSRVNAATVASEIAHSPEREFLVRGAVGSGKSTNLPFLLSKHGSVLLIEPTRPLCENVCKQLRGEPFHCNPTIRMRGLTAFGSTNITIMTSGFALHYYAHNIQQLRLFDFIIFDECHVIDSQAMAFYCLMEGNAIEKKILKVSATPPGREVEFSTQFPTKIVTEQSISFKQLVDNFGTGANSDVTAFADNILVYVASYNEVDQLSKLLSDKGYLVTKIDGRTMKVGKTEISTSGTKFKKHFIVATNIIENGVTLDIEAVIDFGMKVVPEMDSDNRMIRYSKQAISFGERIQRLGRVGRHKEGIALRIGHTEKGIQEIPEMAATEAAFLSFTYGLPVMTHNVGLSLLKNCTVRQARTMQQYELSPFFTQNLVNFDGTVHPKIDVLLRPYKLRDCEVRLSEAAIPHGVQSIWLSARDYEAVGGRLCLEGDVRIPFLIKDVPERLYKELWDIVQTYKRDFTFGRINSVSAGKIAYTLRTDVYSIPRTLITIDKLIESENMKHAHFKAMTSCTGLNSSFSLLGVINTIQSRYLVDHSVENIRKLQLAKAQIQQLEAHMQENNVENLIQSLGAVRAVYHQSVDGFKHIKRELGLKGVWDGSLMIKDAIVCGFTMAGGAMLLYQHFRDKFTNVHVFHQGFSARQRQKLRFKSAANAKLGREVYGDDGTIEHYFGEAYTKKGNKKGKMHGMGVKTRKFVATYGFKPEDYSYVRYLDPLTGETLDESPQTDISMVQDHFSDIRRKYMDSDSFDRQALIANNTIKAYYVRNSAKAALEVDLTPHNPLKVCDNKLTIAGFPDREAELRQTGPPRTIQVDQVPPPSKSVHHEGKSLCQGMRNYNGIASVVCHLKNTSGKGKSLFGIGYNSFIITNRHLFKENNGELIVKSQHGKFIVKNTTTLQIAPVGKTDLLIIRMPKDFPPFHSRARFRAMKAGDKVCMIGVDYQENHIASKVSETSIISEGTGDFGCHWISTNDGDCGNPLVSVSDGFIVGLHSLSTSTGDQNFFAKIPAQFEEKVLRKIDDLTWSKHWSYNINELSWGALKVWESRPEAIFNAQKEVNQLNVFEQSGGRWLFDKLHGNLKGVSSAPSNLVTKHVVKGICPLFRNYLECDEEAKAFFSPLMGHYMKSVLSKEAYIKDLLKYSSDIVVGEVNHDVFEDSVAQVIELLNDHECPELEYITDSEVIIQALNMDAAVGALYTGKKRKYFEGSTVEHRQALVRKSCERLYEGRMGVWNGSLKAELRPAEKVLAKKTRSFTAAPLDTLLGAKVCVDDFNNWFYSKNMECPWTVGMTKFYKGWDEFLKKFPDGWVYCDADGSQFDSSLTPYLLNAVLSIRLWAMEDWDIGEQMLKNLYGEITYTPILTPDGTIVKKFKGNNSGQPSTVVDNTLMVLITMYYALRKAGYDTKTQEDMCVFYINGDDLCIAIHPDHEHVLDSFSSSFAELGLKYDFAQRHRNKQNLWFMSHRGILIDDIYIPKLEPERIVAILEWDKSKLPEHRLEAITAAMIESWGYGDLTHQIRRFYQWVLEQAPFNELAKQGRAPYVSEVGLRRLYTSERGSMDELEAYIDKYFERERGDSPELLVYHESRGTDDYQLVCSNNTHVFHQSKNEAVDAGLNEKLKEKEKQKEKEKEKQKEKEKDGASDGNDVSTSTKTGERDRDVNVGTSGTFTVPRIKSFTDKMVLPRIKGKTVLNLNHLLQYNPQQIDISNTRATHSQFEKWYEGVRNDYGLNDNEMQVMLNGLMVWCIENGTSPDISGVWVMMDGETQVDYPIKPLIEHATPSFRQIMAHFSNAAEAYIAKRNATERYMPRYGIKRNLTDISLARYAFDFYEVNSKTPDRAREAHMQMKAAALRNTSRRMFGMDGSVSNKEENTERHTVEDVNRDMHSLLGMRN.

The 140-residue stretch at 408–547 folds into the Peptidase S30 domain; the sequence is IVGNSKINYI…RSVYAKMDQY (140 aa). Active-site for P1 proteinase activity residues include H456, D465, and S499. The Involved in interaction with stylet and aphid transmission signature appears at 598–601; it reads KITC. Positions 856–858 match the Involved in virions binding and aphid transmission motif; it reads PTK. Residues 882–1004 form the Peptidase C6 domain; it reads MYIAKKGYCY…DSEMKHYIVG (123 aa). Residues C890 and H963 each act as for helper component proteinase activity in the active site. A Helicase ATP-binding domain is found at 1473-1625; sequence EIAHSPEREF…TQFPTKIVTE (153 aa). ATP is bound at residue 1486 to 1493; it reads GAVGSGKS. The short motif at 1575–1578 is the DECH box element; sequence DECH. Positions 1644–1803 constitute a Helicase C-terminal domain; that stretch reads DVTAFADNIL…GLPVMTHNVG (160 aa). Positions 2134–2141 match the Nuclear localization signal motif; that stretch reads KKGNKKGK. Y2156 bears the O-(5'-phospho-RNA)-tyrosine mark. The Peptidase C4 domain occupies 2283-2499; sequence GKSLCQGMRN…LSWGALKVWE (217 aa). Active-site for nuclear inclusion protein A activity residues include H2327, D2362, and C2431. Residues 2761-2885 form the RdRp catalytic domain; sequence WVYCDADGSQ…AIHPDHEHVL (125 aa). Residues 3059 to 3093 are compositionally biased toward basic and acidic residues; the sequence is KNEAVDAGLNEKLKEKEKQKEKEKEKQKEKEKDGA. Residues 3059 to 3116 form a disordered region; the sequence is KNEAVDAGLNEKLKEKEKQKEKEKEKQKEKEKDGASDGNDVSTSTKTGERDRDVNVGT.

This sequence belongs to the potyviridae genome polyprotein family. In terms of assembly, interacts with host eIF4E protein (via cap-binding region); this interaction mediates the translation of the VPg-viral RNA conjugates. Part of a complex that comprises VPg, RNA, host EIF4E and EIF4G; this interaction mediates the translation of the VPg-viral RNA conjugates. Post-translationally, VPg is uridylylated by the polymerase and is covalently attached to the 5'-end of the genomic RNA. This uridylylated form acts as a nucleotide-peptide primer for the polymerase. In terms of processing, potyviral RNA is expressed as two polyproteins which undergo post-translational proteolytic processing. Genome polyprotein is processed by NIa-pro, P1 and HC-pro proteinases resulting in the production of at least ten individual proteins. P3N-PIPO polyprotein is cleaved by P1 and HC-pro proteinases resulting in the production of three individual proteins. The P1 proteinase and the HC-pro cleave only their respective C-termini autocatalytically. 6K1 is essential for proper proteolytic separation of P3 from CI.

The protein localises to the host cytoplasmic vesicle. Its subcellular location is the host nucleus. It is found in the virion. It carries out the reaction RNA(n) + a ribonucleoside 5'-triphosphate = RNA(n+1) + diphosphate. The enzyme catalyses Hydrolyzes glutaminyl bonds, and activity is further restricted by preferences for the amino acids in P6 - P1' that vary with the species of potyvirus, e.g. Glu-Xaa-Xaa-Tyr-Xaa-Gln-|-(Ser or Gly) for the enzyme from tobacco etch virus. The natural substrate is the viral polyprotein, but other proteins and oligopeptides containing the appropriate consensus sequence are also cleaved.. The catalysed reaction is Hydrolyzes a Gly-|-Gly bond at its own C-terminus, commonly in the sequence -Tyr-Xaa-Val-Gly-|-Gly, in the processing of the potyviral polyprotein.. Its function is as follows. Required for aphid transmission and also has proteolytic activity. Only cleaves a Gly-Gly dipeptide at its own C-terminus. Interacts with virions and aphid stylets. Acts as a suppressor of RNA-mediated gene silencing, also known as post-transcriptional gene silencing (PTGS), a mechanism of plant viral defense that limits the accumulation of viral RNAs. May have RNA-binding activity. In terms of biological role, has helicase activity. It may be involved in replication. Indispensable for virus replication. Functionally, mediates the cap-independent, EIF4E-dependent translation of viral genomic RNAs. Binds to the cap-binding site of host EIF4E and thus interferes with the host EIF4E-dependent mRNA export and translation. VPg-RNA directly binds EIF4E and is a template for transcription. Also forms trimeric complexes with EIF4E-EIF4G, which are templates for translation. Its function is as follows. Has RNA-binding and proteolytic activities. In terms of biological role, an RNA-dependent RNA polymerase that plays an essential role in the virus replication. Involved in aphid transmission, cell-to-cell and systemis movement, encapsidation of the viral RNA and in the regulation of viral RNA amplification. In Carica papaya (Papaya), this protein is Genome polyprotein.